Reading from the N-terminus, the 59-residue chain is Antitoxin Rv0909 (59 aa).

Functionally, antitoxin component of a type II toxin-antitoxin (TA) system. Upon expression in M.smegmatis neutralizes the effect of cognate toxin Rv0910. The chain is Antitoxin Rv0909 from Mycobacterium tuberculosis (strain ATCC 25618 / H37Rv).